Consider the following 73-residue polypeptide: Salivary thrombin inhibitor XC-42 (73 aa).

The first 23 residues, 1 to 23 (MKLQFLFIFIAFCVMLFAQIATA), serve as a signal peptide directing secretion.

Interacts with human F2 (thrombin). In terms of tissue distribution, salivary gland (at protein level).

Its subcellular location is the secreted. Functionally, acts as a competitive inhibitor of host thrombin. This is Salivary thrombin inhibitor XC-42 from Xenopsylla cheopis (Oriental rat flea).